A 340-amino-acid chain; its full sequence is uncharacterized protein (340 aa).

The segment at 6–70 adopts an RING-CH-type zinc-finger fold; sequence KYEKSSARCW…PQCLTAYRIA (65 aa). Residues cysteine 14, cysteine 17, cysteine 37, cysteine 39, histidine 44, cysteine 47, cysteine 60, and cysteine 63 each coordinate Zn(2+). The next 3 membrane-spanning stretches (helical) occupy residues 249–269, 274–294, and 300–320; these read EFWI…TKIL, PILL…GNFT, and IIGA…FIAW.

The protein resides in the membrane. This is an uncharacterized protein from Schizosaccharomyces pombe (strain 972 / ATCC 24843) (Fission yeast).